The chain runs to 513 residues: Probable DNA ligase (513 aa).

Glu-213 lines the ATP pocket. The N6-AMP-lysine intermediate role is filled by Lys-215. Positions 220, 235, 264, 304, 376, and 382 each coordinate ATP.

This sequence belongs to the ATP-dependent DNA ligase family. Mg(2+) is required as a cofactor.

It carries out the reaction ATP + (deoxyribonucleotide)n-3'-hydroxyl + 5'-phospho-(deoxyribonucleotide)m = (deoxyribonucleotide)n+m + AMP + diphosphate.. In terms of biological role, DNA ligase that seals nicks in double-stranded DNA during DNA replication, DNA recombination and DNA repair. This is Probable DNA ligase from Anaeromyxobacter dehalogenans (strain 2CP-C).